A 778-amino-acid polypeptide reads, in one-letter code: Hyperosmolality-gated Ca2+ permeable channel 1.4 (778 aa).

The next 10 helical transmembrane spans lie at 7–27 (IGLA…LFAI), 101–121 (IYLI…SILV), 158–178 (FWAH…VLMK), 375–395 (FVMH…IAFV), 427–447 (FLPG…LMIM), 467–487 (YYIF…SAFE), 512–532 (ATFF…GEIF), 584–604 (PVTP…YLVF), 626–646 (VHGR…GLMS), and 651–671 (VQST…HRFC). Positions 738 to 778 (VVQTKRQRSRRTTVASSNASRGSSQSTPFNQLDLGKGKPET) are disordered. The span at 753–763 (SSNASRGSSQS) shows a compositional bias: low complexity.

The protein belongs to the CSC1 (TC 1.A.17) family.

It is found in the membrane. Acts as an osmosensitive calcium-permeable cation channel. This Arabidopsis thaliana (Mouse-ear cress) protein is Hyperosmolality-gated Ca2+ permeable channel 1.4.